The primary structure comprises 284 residues: Shikimate dehydrogenase (NADP(+)) (284 aa).

Shikimate-binding positions include 20 to 22 (SIS) and serine 67. Lysine 71 acts as the Proton acceptor in catalysis. Asparagine 92 and aspartate 107 together coordinate shikimate. Residues 129 to 133 (GAGGA) and valine 227 each bind NADP(+). Tyrosine 229 contributes to the shikimate binding site. Position 250 (glycine 250) interacts with NADP(+).

The protein belongs to the shikimate dehydrogenase family. Homodimer.

It catalyses the reaction shikimate + NADP(+) = 3-dehydroshikimate + NADPH + H(+). Its pathway is metabolic intermediate biosynthesis; chorismate biosynthesis; chorismate from D-erythrose 4-phosphate and phosphoenolpyruvate: step 4/7. In terms of biological role, involved in the biosynthesis of the chorismate, which leads to the biosynthesis of aromatic amino acids. Catalyzes the reversible NADPH linked reduction of 3-dehydroshikimate (DHSA) to yield shikimate (SA). In Streptococcus sanguinis (strain SK36), this protein is Shikimate dehydrogenase (NADP(+)).